A 142-amino-acid chain; its full sequence is Translation initiation factor 2 subunit beta (142 aa).

This sequence belongs to the eIF-2-beta/eIF-5 family. Heterotrimer composed of an alpha, a beta and a gamma chain.

Its function is as follows. eIF-2 functions in the early steps of protein synthesis by forming a ternary complex with GTP and initiator tRNA. The protein is Translation initiation factor 2 subunit beta of Thermococcus gammatolerans (strain DSM 15229 / JCM 11827 / EJ3).